The following is a 560-amino-acid chain: Zinc finger protein 619 (560 aa).

10 C2H2-type zinc fingers span residues 188 to 210, 216 to 238, 244 to 266, 272 to 294, 300 to 322, 328 to 350, 356 to 378, 384 to 406, 412 to 434, and 440 to 462; these read YKCG…QRVH, YTCK…QKIH, YSCE…QKLH, YECT…QRIH, FKCK…ERIH, YECK…QRIH, YECK…QRFH, YKCN…QRIH, YECQ…QRVH, and YECK…QKWH.

The protein belongs to the krueppel C2H2-type zinc-finger protein family.

It is found in the nucleus. Its function is as follows. May be involved in transcriptional regulation. This Homo sapiens (Human) protein is Zinc finger protein 619 (ZNF619).